Reading from the N-terminus, the 208-residue chain is dITP/XTP pyrophosphatase (208 aa).

7 to 12 contacts substrate; that stretch reads SNNAKK. Residues glutamate 39 and aspartate 68 each coordinate Mg(2+). Catalysis depends on aspartate 68, which acts as the Proton acceptor. Substrate is bound by residues serine 69, 162 to 165, lysine 185, and 190 to 191; these read FGYD and HR.

Belongs to the HAM1 NTPase family. In terms of assembly, homodimer. Requires Mg(2+) as cofactor.

It carries out the reaction XTP + H2O = XMP + diphosphate + H(+). The catalysed reaction is dITP + H2O = dIMP + diphosphate + H(+). The enzyme catalyses ITP + H2O = IMP + diphosphate + H(+). Functionally, pyrophosphatase that catalyzes the hydrolysis of nucleoside triphosphates to their monophosphate derivatives, with a high preference for the non-canonical purine nucleotides XTP (xanthosine triphosphate), dITP (deoxyinosine triphosphate) and ITP. Seems to function as a house-cleaning enzyme that removes non-canonical purine nucleotides from the nucleotide pool, thus preventing their incorporation into DNA/RNA and avoiding chromosomal lesions. The protein is dITP/XTP pyrophosphatase of Methylibium petroleiphilum (strain ATCC BAA-1232 / LMG 22953 / PM1).